A 63-amino-acid chain; its full sequence is Cytochrome c oxidase subunit 7C, mitochondrial (63 aa).

Residues 1-16 constitute a mitochondrion transit peptide; it reads MLGQSIRRFTTSVVRR. Over 17–33 the chain is Mitochondrial matrix; the sequence is SHYEEGPGKNLPFSVEN. Lysine 25 bears the N6-acetyllysine; alternate mark. Lysine 25 is subject to N6-succinyllysine; alternate. Residues 34–60 traverse the membrane as a helical segment; sequence KWSLLAKMCLYFGSAFATPFLVVRHQL. Residues 61–63 lie on the Mitochondrial intermembrane side of the membrane; that stretch reads LKT.

Belongs to the cytochrome c oxidase VIIc family. In terms of assembly, component of the cytochrome c oxidase (complex IV, CIV), a multisubunit enzyme composed of 14 subunits. The complex is composed of a catalytic core of 3 subunits MT-CO1, MT-CO2 and MT-CO3, encoded in the mitochondrial DNA, and 11 supernumerary subunits COX4I1 (or COX4I2), COX5A, COX5B, COX6A1 (or COX6A2), COX6B1 (or COX6B2), COX6C, COX7A2 (or COX7A1), COX7B, COX7C, COX8A and NDUFA4, which are encoded in the nuclear genome. The complex exists as a monomer or a dimer and forms supercomplexes (SCs) in the inner mitochondrial membrane with NADH-ubiquinone oxidoreductase (complex I, CI) and ubiquinol-cytochrome c oxidoreductase (cytochrome b-c1 complex, complex III, CIII), resulting in different assemblies (supercomplex SCI(1)III(2)IV(1) and megacomplex MCI(2)III(2)IV(2)). Interacts with RAB5IF.

It is found in the mitochondrion inner membrane. Its pathway is energy metabolism; oxidative phosphorylation. In terms of biological role, component of the cytochrome c oxidase, the last enzyme in the mitochondrial electron transport chain which drives oxidative phosphorylation. The respiratory chain contains 3 multisubunit complexes succinate dehydrogenase (complex II, CII), ubiquinol-cytochrome c oxidoreductase (cytochrome b-c1 complex, complex III, CIII) and cytochrome c oxidase (complex IV, CIV), that cooperate to transfer electrons derived from NADH and succinate to molecular oxygen, creating an electrochemical gradient over the inner membrane that drives transmembrane transport and the ATP synthase. Cytochrome c oxidase is the component of the respiratory chain that catalyzes the reduction of oxygen to water. Electrons originating from reduced cytochrome c in the intermembrane space (IMS) are transferred via the dinuclear copper A center (CU(A)) of subunit 2 and heme A of subunit 1 to the active site in subunit 1, a binuclear center (BNC) formed by heme A3 and copper B (CU(B)). The BNC reduces molecular oxygen to 2 water molecules using 4 electrons from cytochrome c in the IMS and 4 protons from the mitochondrial matrix. This Homo sapiens (Human) protein is Cytochrome c oxidase subunit 7C, mitochondrial (COX7C).